We begin with the raw amino-acid sequence, 291 residues long: ATP phosphoribosyltransferase (291 aa).

This sequence belongs to the ATP phosphoribosyltransferase family. Long subfamily. Mg(2+) serves as cofactor.

The protein localises to the cytoplasm. The enzyme catalyses 1-(5-phospho-beta-D-ribosyl)-ATP + diphosphate = 5-phospho-alpha-D-ribose 1-diphosphate + ATP. It functions in the pathway amino-acid biosynthesis; L-histidine biosynthesis; L-histidine from 5-phospho-alpha-D-ribose 1-diphosphate: step 1/9. With respect to regulation, feedback inhibited by histidine. In terms of biological role, catalyzes the condensation of ATP and 5-phosphoribose 1-diphosphate to form N'-(5'-phosphoribosyl)-ATP (PR-ATP). Has a crucial role in the pathway because the rate of histidine biosynthesis seems to be controlled primarily by regulation of HisG enzymatic activity. This Geotalea daltonii (strain DSM 22248 / JCM 15807 / FRC-32) (Geobacter daltonii) protein is ATP phosphoribosyltransferase.